A 206-amino-acid polypeptide reads, in one-letter code: ATP phosphoribosyltransferase (206 aa).

Belongs to the ATP phosphoribosyltransferase family. Short subfamily. Heteromultimer composed of HisG and HisZ subunits.

The protein resides in the cytoplasm. It carries out the reaction 1-(5-phospho-beta-D-ribosyl)-ATP + diphosphate = 5-phospho-alpha-D-ribose 1-diphosphate + ATP. Its pathway is amino-acid biosynthesis; L-histidine biosynthesis; L-histidine from 5-phospho-alpha-D-ribose 1-diphosphate: step 1/9. In terms of biological role, catalyzes the condensation of ATP and 5-phosphoribose 1-diphosphate to form N'-(5'-phosphoribosyl)-ATP (PR-ATP). Has a crucial role in the pathway because the rate of histidine biosynthesis seems to be controlled primarily by regulation of HisG enzymatic activity. This chain is ATP phosphoribosyltransferase, found in Wolinella succinogenes (strain ATCC 29543 / DSM 1740 / CCUG 13145 / JCM 31913 / LMG 7466 / NCTC 11488 / FDC 602W) (Vibrio succinogenes).